A 499-amino-acid chain; its full sequence is Acetylcholine receptor subunit alpha-type acr-16 (499 aa).

An N-terminal signal peptide occupies residues 1 to 19; the sequence is MSSVCALLLSCALFLVAHG. The Extracellular segment spans residues 20-232; the sequence is SLQERRLYED…LHMRRRTLYY (213 aa). N-linked (GlcNAc...) asparagine glycosylation is found at Asn43 and Asn93. Intrachain disulfides connect Cys147–Cys161 and Cys211–Cys212. The next 3 membrane-spanning stretches (helical) occupy residues 233–253, 261–281, and 289–309; these read GFNL…GFTL, ITLQ…VSEM, and VPLL…STVF. Residues 310 to 473 are Cytoplasmic-facing; the sequence is TVYVLNLHYR…WKFAAMVVDR (164 aa). The chain crosses the membrane as a helical span at residues 474–494; the sequence is LCLYVFTIFIIASTIGIFWSA. Topologically, residues 495–499 are extracellular; that stretch reads PYLVA.

Belongs to the ligand-gated ion channel (TC 1.A.9) family. Acetylcholine receptor (TC 1.A.9.1) subfamily.

It localises to the postsynaptic cell membrane. It is found in the cell membrane. After binding acetylcholine, the AChR responds by an extensive change in conformation that affects all subunits and leads to opening of an ion-conducting channel across the plasma membrane. A subunit of the levamisole-insensitive nicotinic receptor. The polypeptide is Acetylcholine receptor subunit alpha-type acr-16 (Caenorhabditis briggsae).